The chain runs to 515 residues: uncharacterized protein (515 aa).

3 helical membrane passes run 1–21 (MSFVVAAPEVVVAAASDLAGI), 165–185 (IGGPGATGLAGGAGGVGGLLF), and 199–219 (GPVGATGGIGGPGGAAVGLFG). One can recognise a PE domain in the interval 1–93 (MSFVVAAPEV…AGAYAGAEAA (93 aa)). The span at 349 to 360 (GGTLIGNGGDGG) shows a compositional bias: gly residues. 2 disordered regions span residues 349–368 (GGTLIGNGGDGGNSVQTDGF) and 463–515 (GVSG…SPGG).

Belongs to the mycobacterial PE family. PGRS subfamily.

The protein resides in the cell membrane. This is an uncharacterized protein from Mycobacterium tuberculosis (strain CDC 1551 / Oshkosh).